A 97-amino-acid polypeptide reads, in one-letter code: Large ribosomal subunit protein uL23 (97 aa).

It belongs to the universal ribosomal protein uL23 family. In terms of assembly, part of the 50S ribosomal subunit. Contacts protein L29, and trigger factor when it is bound to the ribosome.

In terms of biological role, one of the early assembly proteins it binds 23S rRNA. One of the proteins that surrounds the polypeptide exit tunnel on the outside of the ribosome. Forms the main docking site for trigger factor binding to the ribosome. This chain is Large ribosomal subunit protein uL23, found in Brachyspira hyodysenteriae (strain ATCC 49526 / WA1).